Reading from the N-terminus, the 344-residue chain is Adenine deaminase (344 aa).

3 residues coordinate Zn(2+): His24, His26, and His204. Glu207 functions as the Proton donor in the catalytic mechanism. Asp285 is a Zn(2+) binding site. Position 286 (Asp286) interacts with substrate.

The protein belongs to the metallo-dependent hydrolases superfamily. Adenosine and AMP deaminases family. Adenine deaminase type 2 subfamily. Zn(2+) is required as a cofactor.

The enzyme catalyses adenine + H2O + H(+) = hypoxanthine + NH4(+). Its function is as follows. Catalyzes the hydrolytic deamination of adenine to hypoxanthine. Plays an important role in the purine salvage pathway and in nitrogen catabolism. The polypeptide is Adenine deaminase (Caulobacter vibrioides (strain ATCC 19089 / CIP 103742 / CB 15) (Caulobacter crescentus)).